The sequence spans 217 residues: Adenylate kinase (217 aa).

10–15 (GAGKGT) provides a ligand contact to ATP. The interval 30-59 (STGDMFRAAIKAGTALGMKAKEYMDAGSLV) is NMP. AMP is bound by residues Thr-31, Arg-36, 57–59 (SLV), 85–88 (GFPR), and Gln-92. Residues 126 to 163 (GRRICRQCGGTYHMVFNPPAAEAVCDKCGGELYQRSDD) are LID. Arg-127 is an ATP binding site. Residues Cys-130 and Cys-133 each contribute to the Zn(2+) site. Residue 136–137 (TY) coordinates ATP. Zn(2+) is bound by residues Cys-150 and Cys-153. Positions 160 and 171 each coordinate AMP. Position 199 (Gln-199) interacts with ATP.

It belongs to the adenylate kinase family. In terms of assembly, monomer.

Its subcellular location is the cytoplasm. It catalyses the reaction AMP + ATP = 2 ADP. It participates in purine metabolism; AMP biosynthesis via salvage pathway; AMP from ADP: step 1/1. Functionally, catalyzes the reversible transfer of the terminal phosphate group between ATP and AMP. Plays an important role in cellular energy homeostasis and in adenine nucleotide metabolism. This is Adenylate kinase from Desulfitobacterium hafniense (strain DSM 10664 / DCB-2).